The sequence spans 156 residues: Small ribosomal subunit protein uS7 (156 aa).

It belongs to the universal ribosomal protein uS7 family. As to quaternary structure, part of the 30S ribosomal subunit. Contacts proteins S9 and S11.

In terms of biological role, one of the primary rRNA binding proteins, it binds directly to 16S rRNA where it nucleates assembly of the head domain of the 30S subunit. Is located at the subunit interface close to the decoding center, probably blocks exit of the E-site tRNA. This is Small ribosomal subunit protein uS7 from Leuconostoc citreum (strain KM20).